We begin with the raw amino-acid sequence, 494 residues long: Cytochrome P450 2G1 (494 aa).

A heme-binding site is contributed by Cys-439.

The protein belongs to the cytochrome P450 family. The cofactor is heme. Olfactory epithelium.

The protein localises to the endoplasmic reticulum membrane. It localises to the microsome membrane. The enzyme catalyses an organic molecule + reduced [NADPH--hemoprotein reductase] + O2 = an alcohol + oxidized [NADPH--hemoprotein reductase] + H2O + H(+). Its function is as follows. Cytochromes P450 are a group of heme-thiolate monooxygenases. This isozyme seems to be implicated in olfaction. This chain is Cytochrome P450 2G1 (Cyp2g1), found in Rattus norvegicus (Rat).